The following is a 160-amino-acid chain: Snaclec subunit A (160 aa).

Residues 1–23 (MGRFILVNLGLLVVAFSLRGSEA) form the signal peptide. Cystine bridges form between Cys-25–Cys-36, Cys-53–Cys-150, and Cys-125–Cys-142. In terms of domain architecture, C-type lectin spans 32–151 (YDKYCYKVFD…CDFTLPFICK (120 aa)).

This sequence belongs to the snaclec family. In terms of assembly, heterodimer of subunits A and B; disulfide-linked. As to expression, expressed by the venom gland.

It localises to the secreted. Interferes with one step of hemostasis (modulation of platelet aggregation, or coagulation cascade, for example). The protein is Snaclec subunit A of Philodryas olfersii (Green snake).